Consider the following 256-residue polypeptide: Geranylgeranylglyceryl phosphate synthase (256 aa).

2 residues coordinate Mg(2+): aspartate 28 and serine 53. Sn-glycerol 1-phosphate-binding positions include 172–178 (YLEAGSG), 203–204 (GG), and 225–226 (GT).

The protein belongs to the GGGP/HepGP synthase family. Group II subfamily. Mg(2+) is required as a cofactor.

The protein localises to the cytoplasm. It carries out the reaction sn-glycerol 1-phosphate + (2E,6E,10E)-geranylgeranyl diphosphate = sn-3-O-(geranylgeranyl)glycerol 1-phosphate + diphosphate. It functions in the pathway membrane lipid metabolism; glycerophospholipid metabolism. Prenyltransferase that catalyzes the transfer of the geranylgeranyl moiety of geranylgeranyl diphosphate (GGPP) to the C3 hydroxyl of sn-glycerol-1-phosphate (G1P). This reaction is the first ether-bond-formation step in the biosynthesis of archaeal membrane lipids. The sequence is that of Geranylgeranylglyceryl phosphate synthase from Methanococcus maripaludis (strain DSM 14266 / JCM 13030 / NBRC 101832 / S2 / LL).